The sequence spans 448 residues: Serine/threonine-protein phosphatase 2A regulatory subunit B'' subunit gamma (448 aa).

EF-hand domains follow at residues 268–303 (PSAL…TLTC) and 336–371 (KEPA…IQEQ). Ca(2+) contacts are provided by Asp281, Asp283, Asn285, Met287, and Glu292.

It is found in the nucleus. The protein resides in the cytoplasm. Its function is as follows. Possible role in the regulation of cell death. This Xenopus tropicalis (Western clawed frog) protein is Serine/threonine-protein phosphatase 2A regulatory subunit B'' subunit gamma (ppp2r3c).